The chain runs to 586 residues: Zinc finger protein Eos (586 aa).

Disordered stretches follow at residues 1-42 (MHTP…APDF) and 68-98 (EKEF…SANS). Residues 25–34 (QGKDNLEREL) are compositionally biased toward basic and acidic residues. Residues 79 to 98 (SVSTPNSQHSSPSRSLSANS) show a composition bias toward polar residues. Lysine 100 is covalently cross-linked (Glycyl lysine isopeptide (Lys-Gly) (interchain with G-Cter in SUMO2)). Serine 105 bears the Phosphoserine mark. C2H2-type zinc fingers lie at residues 159-181 (LKCD…KRSH), 187-209 (FHCN…IKLH), 215-237 (FKCP…LRTH), and 248-271 (YKCN…ERCH). The interaction with FOXP3 stretch occupies residues 281–586 (AQALTGQPGD…HIVRGEHKVG (306 aa)). An N6-acetyllysine modification is found at lysine 335. A disordered region spans residues 413-490 (RLELPGSREA…QPPPTIVVGR (78 aa)). The CTBP-binding motif PEDLG signature appears at 423–433 (GEGPEDLGDGG). Residues 476 to 485 (QGPPPQPPPT) show a composition bias toward pro residues. Residue lysine 501 forms a Glycyl lysine isopeptide (Lys-Gly) (interchain with G-Cter in SUMO2) linkage. 2 C2H2-type zinc fingers span residues 531-553 (FKCE…MGCH) and 559-583 (FECN…RGEH).

Belongs to the Ikaros C2H2-type zinc-finger protein family. Self-associates. Interacts with other family members; IKZF1, IKZF2, IKZF3 and IKZF5. Interacts with CTBP2, SPI1 and MITF. Interacts with FOXP3 and CTBP1. As to expression, expressed mainly in the brain. Up-regulated in long term cultured astrocytes. Down-regulated during osteoclast differentiation.

The protein resides in the nucleus. DNA-binding protein that binds to the 5'GGGAATRCC-3' Ikaros-binding sequence. Interacts with SPI1 and MITF to repress transcription of the CTSK and ACP5 promoters via recruitment of corepressors SIN3A and CTBP2. May be involved in the development of central and peripheral nervous systems. Essential for the inhibitory function of regulatory T-cells (Treg). Mediates FOXP3-mediated gene silencing in regulatory T-cells (Treg) via recruitment of corepressor CTBP1. The protein is Zinc finger protein Eos (Ikzf4) of Mus musculus (Mouse).